The chain runs to 208 residues: Negative modulator of initiation of replication (208 aa).

Residues 115–116 form an interaction with DNA region; the sequence is AV.

The protein belongs to the SeqA family. Homodimer. Polymerizes to form helical filaments.

It localises to the cytoplasm. Its function is as follows. Negative regulator of replication initiation, which contributes to regulation of DNA replication and ensures that replication initiation occurs exactly once per chromosome per cell cycle. Binds to pairs of hemimethylated GATC sequences in the oriC region, thus preventing assembly of replication proteins and re-initiation at newly replicated origins. Repression is relieved when the region becomes fully methylated. This is Negative modulator of initiation of replication from Shewanella frigidimarina (strain NCIMB 400).